The sequence spans 83 residues: MPAIEVGRIAVVIAGRRAGQKVVVADIIDKNFVLVTGAGLNKVKRRRMNVKHLEPLPERVNIQRGASDEEIKAALEGAGISLE.

Belongs to the eukaryotic ribosomal protein eL14 family. In terms of assembly, part of the 50S ribosomal subunit.

The protein is Large ribosomal subunit protein eL14 of Thermococcus kodakarensis (strain ATCC BAA-918 / JCM 12380 / KOD1) (Pyrococcus kodakaraensis (strain KOD1)).